Reading from the N-terminus, the 156-residue chain is Deoxyuridine 5'-triphosphate nucleotidohydrolase (156 aa).

Substrate is bound by residues 74–76 (RSG), Asn87, 91–93 (TID), and Lys101.

This sequence belongs to the dUTPase family. Mg(2+) serves as cofactor.

It carries out the reaction dUTP + H2O = dUMP + diphosphate + H(+). It participates in pyrimidine metabolism; dUMP biosynthesis; dUMP from dCTP (dUTP route): step 2/2. In terms of biological role, this enzyme is involved in nucleotide metabolism: it produces dUMP, the immediate precursor of thymidine nucleotides and it decreases the intracellular concentration of dUTP so that uracil cannot be incorporated into DNA. The sequence is that of Deoxyuridine 5'-triphosphate nucleotidohydrolase from Wolbachia sp. subsp. Brugia malayi (strain TRS).